A 295-amino-acid polypeptide reads, in one-letter code: Indole-3-glycerol phosphate synthase (295 aa).

The protein belongs to the TrpC family.

The catalysed reaction is 1-(2-carboxyphenylamino)-1-deoxy-D-ribulose 5-phosphate + H(+) = (1S,2R)-1-C-(indol-3-yl)glycerol 3-phosphate + CO2 + H2O. The protein operates within amino-acid biosynthesis; L-tryptophan biosynthesis; L-tryptophan from chorismate: step 4/5. The chain is Indole-3-glycerol phosphate synthase from Prochlorococcus marinus (strain AS9601).